A 166-amino-acid polypeptide reads, in one-letter code: Putative 4-hydroxy-4-methyl-2-oxoglutarate aldolase (166 aa).

Residues 74–77 and Arg96 each bind substrate; that span reads GDQI. An a divalent metal cation-binding site is contributed by Asp97.

The protein belongs to the class II aldolase/RraA-like family. As to quaternary structure, homotrimer. A divalent metal cation is required as a cofactor.

The enzyme catalyses 4-hydroxy-4-methyl-2-oxoglutarate = 2 pyruvate. The catalysed reaction is oxaloacetate + H(+) = pyruvate + CO2. In terms of biological role, catalyzes the aldol cleavage of 4-hydroxy-4-methyl-2-oxoglutarate (HMG) into 2 molecules of pyruvate. Also contains a secondary oxaloacetate (OAA) decarboxylase activity due to the common pyruvate enolate transition state formed following C-C bond cleavage in the retro-aldol and decarboxylation reactions. In Xanthomonas oryzae pv. oryzae (strain MAFF 311018), this protein is Putative 4-hydroxy-4-methyl-2-oxoglutarate aldolase.